A 446-amino-acid chain; its full sequence is Xanthone prenyltransferase A (446 aa).

Residues Arg-113, Lys-199, Tyr-201, Arg-263, Lys-265, Tyr-267, Tyr-369, and Tyr-440 each coordinate dimethylallyl diphosphate.

Belongs to the tryptophan dimethylallyltransferase family.

Its pathway is secondary metabolite biosynthesis. Its function is as follows. Xanthone prenyltransferase involved in the conversion of monodictyphenone to the prenyl xanthones such as emericellin, shamixanthone and epishamixanthone. Monodictyphenone is first converted to variecoxanthone A via a paeciloxanthone intermediate by the consecutive actions of the FAD-dependent monooxygenase mdpD and the xanthone prenyltransferase xptB. XptB catalyzes regular O-prenylation at the hydroxy group of C-7 of the xanthone ring. Variecoxanthone A is further prenylated to emericellin by xptA before being reduced to shamixanthone and epishamixanthone by the dehydrogenase xptC. The protein is Xanthone prenyltransferase A of Emericella nidulans (strain FGSC A4 / ATCC 38163 / CBS 112.46 / NRRL 194 / M139) (Aspergillus nidulans).